A 192-amino-acid polypeptide reads, in one-letter code: Casparian strip membrane protein 1 (192 aa).

Residues Met1–Gly30 lie on the Cytoplasmic side of the membrane. A helical transmembrane segment spans residues Leu31–Ala51. Topologically, residues Thr52–Gln80 are extracellular. Residues Phe81–Val101 traverse the membrane as a helical segment. The Cytoplasmic segment spans residues Val102–Arg113. A helical transmembrane segment spans residues Leu114–Ala134. The Extracellular portion of the chain corresponds to Ala135–Gly166. The helical transmembrane segment at Ala167–Leu187 threads the bilayer. Topologically, residues Ala188–His192 are cytoplasmic.

Belongs to the Casparian strip membrane proteins (CASP) family. In terms of assembly, homodimer and heterodimers.

It is found in the cell membrane. Functionally, regulates membrane-cell wall junctions and localized cell wall deposition. Required for establishment of the Casparian strip membrane domain (CSD) and the subsequent formation of Casparian strips, a cell wall modification of the root endodermis that determines an apoplastic barrier between the intraorganismal apoplasm and the extraorganismal apoplasm and prevents lateral diffusion. This is Casparian strip membrane protein 1 from Vigna unguiculata (Cowpea).